Consider the following 174-residue polypeptide: Protein C2-DOMAIN ABA-RELATED 2 (174 aa).

Residue M1 is modified to N-acetylmethionine. Residues 1-104 form the C2 domain; the sequence is MENMLGLLRL…EAIRIQNQLG (104 aa). Ca(2+) is bound by residues R21, D22, D27, D73, R74, D75, and D81.

It belongs to the plant CAR protein family. Binds to PYR/PYL/RCAR abscisic acid intracellular receptors in an ABA-independent manner, both at the plasma membrane and in the nucleus. The cofactor is Ca(2+).

The protein resides in the cell membrane. Its subcellular location is the nucleus. In terms of biological role, stimulates the GTPase/ATPase activities of Obg-like ATPases. Mediates the transient calcium-dependent interaction of PYR/PYL/RCAR abscisic acid (ABA) receptors with the plasma membrane and thus regulates ABA sensitivity. This Arabidopsis thaliana (Mouse-ear cress) protein is Protein C2-DOMAIN ABA-RELATED 2.